We begin with the raw amino-acid sequence, 881 residues long: Phosphoenolpyruvate carboxylase (881 aa).

Catalysis depends on residues histidine 142 and lysine 547.

The protein belongs to the PEPCase type 1 family. The cofactor is Mg(2+).

The enzyme catalyses oxaloacetate + phosphate = phosphoenolpyruvate + hydrogencarbonate. Forms oxaloacetate, a four-carbon dicarboxylic acid source for the tricarboxylic acid cycle. This Hahella chejuensis (strain KCTC 2396) protein is Phosphoenolpyruvate carboxylase.